Here is a 226-residue protein sequence, read N- to C-terminus: PKHD-type hydroxylase Bind_0236 (226 aa).

One can recognise a Fe2OG dioxygenase domain in the interval 78 to 178 (TIFPPLFNRY…RIASFFWIQS (101 aa)). Positions 96, 98, and 159 each coordinate Fe cation. R169 serves as a coordination point for 2-oxoglutarate.

It depends on Fe(2+) as a cofactor. The cofactor is L-ascorbate.

This chain is PKHD-type hydroxylase Bind_0236, found in Beijerinckia indica subsp. indica (strain ATCC 9039 / DSM 1715 / NCIMB 8712).